A 314-amino-acid polypeptide reads, in one-letter code: Protein REGULATOR OF FATTY ACID COMPOSITION 3, chloroplastic (314 aa).

The transit peptide at 1–47 directs the protein to the chloroplast; the sequence is MESLLHASSSLVSLRPRIDGRDSFINPSRVCLNPSLGRRGSKPLPLV. 2 disordered regions span residues 49–73 and 214–314; these read AAKK…ATGP and AITE…NVGG. A compositionally biased stretch (basic and acidic residues) spans 56–69; the sequence is KKDDNHNFSARPDE. 2 stretches are compositionally biased toward acidic residues: residues 233–269 and 277–294; these read EYYD…DDDG and GDEE…EQEE. Positions 295–308 are enriched in basic and acidic residues; that stretch reads GQDKSTNGRRETRR.

The protein belongs to the bacterial ribosomal protein bS6 family. As to quaternary structure, interacts with CFM3B/SPRT2 in plastids. Expressed ubiquitously in roots, leaves, stems, flower buds, flowers and siliques.

The protein resides in the plastid. The protein localises to the chloroplast. Its function is as follows. Prevents non-specific action of the splicing factor CFM3b during plastid rRNA biogenesis to improve the accuracy of plastid rRNA processing. Required for plastid functions such as photosynthesis, intracellular distribution, plastid rRNAs biosynthesis and plastid gene expression in roots. Involved in a sucrose-conditional process important for the organization of root lateral and apical meristems (e.g. establishment of RAM from pericycle and symplasmic connectivity), and subsequent primary and lateral roots development. Modulates C18 unsaturated fatty acid metabolism. The chain is Protein REGULATOR OF FATTY ACID COMPOSITION 3, chloroplastic from Arabidopsis thaliana (Mouse-ear cress).